The following is a 377-amino-acid chain: MNHSDTLSLSLELLEQPSVTPIDHTCQTIMADRLAKVGFHIEPMRFGDVDNLWARRGTEGPVFCFAGHTDVVPTGRLDAWNSDPFAPEIRDGKLYGRGSADMKTALAAMVVASERFVAKHPNHKGSIAFLITSDEEGPAVNGTVKVIETLEKRNEKITWCLVGEPSSTHKLGDIVKNGRRGSLNAVLKVQGKQGHVAYPHLARNPIHEASPALAELCQTVWDNGNEYFPATSFQISNIHAGTGATNVIPGALEVTFNFRYSTEVTAEQLKQRVHEILDKHGLQYEIVWNLSGLPFLTPVGELVNAAQTAILNVTGTETELSTSGGTSDGRFIAPTGAQVLELGVLNATIHQINEHVDVHDLDPLTDIYEQILENLLA.

His-68 provides a ligand contact to Zn(2+). Residue Asp-70 is part of the active site. Zn(2+) is bound at residue Asp-101. Glu-135 serves as the catalytic Proton acceptor. Glu-136, Glu-164, and His-350 together coordinate Zn(2+).

This sequence belongs to the peptidase M20A family. DapE subfamily. Homodimer. Zn(2+) is required as a cofactor. The cofactor is Co(2+).

It catalyses the reaction N-succinyl-(2S,6S)-2,6-diaminopimelate + H2O = (2S,6S)-2,6-diaminopimelate + succinate. It functions in the pathway amino-acid biosynthesis; L-lysine biosynthesis via DAP pathway; LL-2,6-diaminopimelate from (S)-tetrahydrodipicolinate (succinylase route): step 3/3. In terms of biological role, catalyzes the hydrolysis of N-succinyl-L,L-diaminopimelic acid (SDAP), forming succinate and LL-2,6-diaminopimelate (DAP), an intermediate involved in the bacterial biosynthesis of lysine and meso-diaminopimelic acid, an essential component of bacterial cell walls. This is Succinyl-diaminopimelate desuccinylase from Acinetobacter baumannii (strain AB0057).